A 423-amino-acid chain; its full sequence is Major capsid protein (423 aa).

Positions 47 to 67 are disordered; the sequence is SVSFKRPHQFKSERTETGDIT. The segment covering 56–67 has biased composition (basic and acidic residues); that stretch reads FKSERTETGDIT.

Belongs to the P22 phage major capsid protein family.

It is found in the virion. Its function is as follows. Assembles to form an icosahedral capsid. In Escherichia coli (Bacteriophage APSE-1), this protein is Major capsid protein (24).